The primary structure comprises 345 residues: N-acetyl-gamma-glutamyl-phosphate reductase (345 aa).

C149 is a catalytic residue.

The protein belongs to the NAGSA dehydrogenase family. Type 1 subfamily.

It is found in the cytoplasm. It catalyses the reaction N-acetyl-L-glutamate 5-semialdehyde + phosphate + NADP(+) = N-acetyl-L-glutamyl 5-phosphate + NADPH + H(+). The protein operates within amino-acid biosynthesis; L-arginine biosynthesis; N(2)-acetyl-L-ornithine from L-glutamate: step 3/4. In terms of biological role, catalyzes the NADPH-dependent reduction of N-acetyl-5-glutamyl phosphate to yield N-acetyl-L-glutamate 5-semialdehyde. This Bacillus anthracis protein is N-acetyl-gamma-glutamyl-phosphate reductase.